The primary structure comprises 123 residues: Ribosome-binding factor A (123 aa).

The protein belongs to the RbfA family. Monomer. Binds 30S ribosomal subunits, but not 50S ribosomal subunits or 70S ribosomes.

It localises to the cytoplasm. Its function is as follows. One of several proteins that assist in the late maturation steps of the functional core of the 30S ribosomal subunit. Associates with free 30S ribosomal subunits (but not with 30S subunits that are part of 70S ribosomes or polysomes). Required for efficient processing of 16S rRNA. May interact with the 5'-terminal helix region of 16S rRNA. In Ralstonia pickettii (strain 12J), this protein is Ribosome-binding factor A.